The chain runs to 157 residues: S-ribosylhomocysteine lyase (157 aa).

Residues His-54, His-58, and Cys-124 each coordinate Fe cation.

It belongs to the LuxS family. Homodimer. Requires Fe cation as cofactor.

The enzyme catalyses S-(5-deoxy-D-ribos-5-yl)-L-homocysteine = (S)-4,5-dihydroxypentane-2,3-dione + L-homocysteine. Its function is as follows. Involved in the synthesis of autoinducer 2 (AI-2) which is secreted by bacteria and is used to communicate both the cell density and the metabolic potential of the environment. The regulation of gene expression in response to changes in cell density is called quorum sensing. Catalyzes the transformation of S-ribosylhomocysteine (RHC) to homocysteine (HC) and 4,5-dihydroxy-2,3-pentadione (DPD). The polypeptide is S-ribosylhomocysteine lyase (Oenococcus oeni (strain ATCC BAA-331 / PSU-1)).